We begin with the raw amino-acid sequence, 169 residues long: Probable inosine/xanthosine triphosphatase (169 aa).

Mg(2+) is bound at residue Asp-58.

Belongs to the YjjX NTPase family. As to quaternary structure, homodimer. Requires Mg(2+) as cofactor. Mn(2+) is required as a cofactor.

It carries out the reaction XTP + H2O = XDP + phosphate + H(+). It catalyses the reaction ITP + H2O = IDP + phosphate + H(+). Phosphatase that hydrolyzes non-canonical purine nucleotides such as XTP and ITP to their respective diphosphate derivatives. Probably excludes non-canonical purines from DNA/RNA precursor pool, thus preventing their incorporation into DNA/RNA and avoiding chromosomal lesions. This is Probable inosine/xanthosine triphosphatase from Archaeoglobus fulgidus (strain ATCC 49558 / DSM 4304 / JCM 9628 / NBRC 100126 / VC-16).